The chain runs to 162 residues: UPF0460 protein y4vQ (162 aa).

The protein belongs to the UPF0460 family.

This Sinorhizobium fredii (strain NBRC 101917 / NGR234) protein is UPF0460 protein y4vQ.